The chain runs to 490 residues: Membrane-bound lytic murein transglycosylase F (490 aa).

The first 32 residues, 1–32 (MFALTAYRLRCAAWLLATGIFLLLAGCSEAKA), serve as a signal peptide directing secretion. The non-LT domain stretch occupies residues 33–269 (PTALERVQKE…RLKDRYYGHV (237 aa)). An LT domain region spans residues 270–490 (DVLGYVGAYT…PEEDSGDEKL (221 aa)). Glu316 is a catalytic residue. A disordered region spans residues 467-490 (AESGLHLPGVNKTRPEEDSGDEKL). Residues 479 to 490 (TRPEEDSGDEKL) show a composition bias toward basic and acidic residues.

It in the N-terminal section; belongs to the bacterial solute-binding protein 3 family. The protein in the C-terminal section; belongs to the transglycosylase Slt family.

The protein localises to the cell outer membrane. It catalyses the reaction Exolytic cleavage of the (1-&gt;4)-beta-glycosidic linkage between N-acetylmuramic acid (MurNAc) and N-acetylglucosamine (GlcNAc) residues in peptidoglycan, from either the reducing or the non-reducing ends of the peptidoglycan chains, with concomitant formation of a 1,6-anhydrobond in the MurNAc residue.. Functionally, murein-degrading enzyme that degrades murein glycan strands and insoluble, high-molecular weight murein sacculi, with the concomitant formation of a 1,6-anhydromuramoyl product. Lytic transglycosylases (LTs) play an integral role in the metabolism of the peptidoglycan (PG) sacculus. Their lytic action creates space within the PG sacculus to allow for its expansion as well as for the insertion of various structures such as secretion systems and flagella. In Pseudomonas aeruginosa (strain ATCC 15692 / DSM 22644 / CIP 104116 / JCM 14847 / LMG 12228 / 1C / PRS 101 / PAO1), this protein is Membrane-bound lytic murein transglycosylase F.